The chain runs to 85 residues: CRISPR-associated endoribonuclease Cas2 (85 aa).

D8 contributes to the Mg(2+) binding site.

It belongs to the CRISPR-associated endoribonuclease Cas2 protein family. Homodimer, forms a heterotetramer with a Cas1 homodimer. The cofactor is Mg(2+).

Its function is as follows. CRISPR (clustered regularly interspaced short palindromic repeat), is an adaptive immune system that provides protection against mobile genetic elements (viruses, transposable elements and conjugative plasmids). CRISPR clusters contain sequences complementary to antecedent mobile elements and target invading nucleic acids. CRISPR clusters are transcribed and processed into CRISPR RNA (crRNA). Functions as a ssRNA-specific endoribonuclease. Involved in the integration of spacer DNA into the CRISPR cassette. The polypeptide is CRISPR-associated endoribonuclease Cas2 (Thermococcus kodakarensis (strain ATCC BAA-918 / JCM 12380 / KOD1) (Pyrococcus kodakaraensis (strain KOD1))).